A 160-amino-acid chain; its full sequence is Thebaine synthase 2 (160 aa).

Ser-74 contributes to the thebaine binding site. The active-site Proton acceptor is the His-89. A thebaine-binding site is contributed by Thr-105.

Belongs to the MLP family. In terms of assembly, homodimer (allosteric) and oligomers. Expressed in poppy latex.

The catalysed reaction is (7S)-O-acetylsalutaridinol = thebaine + acetate + H(+). The protein operates within alkaloid biosynthesis; morphine biosynthesis. Slightly inhibited by salutaridine and (7S)-salutaridinol. Its function is as follows. Catalyzes the formation of thebaine from (7S)-salutaridinol 7-O-acetate at the expense of labile hydroxylated by-products, which are preferentially produced by spontaneous allylic elimination. No visible activity toward (7S)-salutaridinol (at pH 7). In Papaver somniferum (Opium poppy), this protein is Thebaine synthase 2.